A 122-amino-acid chain; its full sequence is Histone H2B type 2-K1 (122 aa).

The segment at methionine 1–arginine 30 is disordered. Basic residues predominate over residues glycine 20 to arginine 30. Lysine 31 is subject to N6-(2-hydroxyisobutyryl)lysine; alternate. N6-(beta-hydroxybutyryl)lysine; alternate is present on lysine 31. Position 31 is an N6-crotonyllysine; alternate (lysine 31). Lysine 31 is subject to N6-glutaryllysine; alternate. At lysine 31 the chain carries N6-succinyllysine; alternate. Lysine 31 is covalently cross-linked (Glycyl lysine isopeptide (Lys-Gly) (interchain with G-Cter in ubiquitin); alternate). Position 33 is a phosphoserine (serine 33). Residues lysine 40, lysine 43, and lysine 54 each carry the N6-(2-hydroxyisobutyryl)lysine; alternate modification. N6-glutaryllysine; alternate is present on residues lysine 40 and lysine 43. Lysine 40 bears the N6-lactoyllysine; alternate mark. Position 43 is an N6-methyllysine (lysine 43). Lysine 43 carries the N6-methyllysine; alternate modification. An N6,N6-dimethyllysine modification is found at lysine 54. The residue at position 54 (lysine 54) is an N6,N6-dimethyllysine; alternate. The residue at position 76 (arginine 76) is a Dimethylated arginine. Serine 81 carries the post-translational modification Phosphoserine. Omega-N-methylarginine is present on residues arginine 83 and arginine 89. At lysine 105 the chain carries N6-(2-hydroxyisobutyryl)lysine; alternate. Lysine 105 is subject to N6-glutaryllysine; alternate. Position 105 is an N6-lactoyllysine; alternate (lysine 105). Lysine 105 bears the N6-methyllysine mark. Lysine 105 carries the post-translational modification N6-methyllysine; alternate. Serine 109 carries O-linked (GlcNAc) serine glycosylation. The residue at position 112 (threonine 112) is a Phosphothreonine. 2 positions are modified to N6-(2-hydroxyisobutyryl)lysine; alternate: lysine 113 and lysine 117. 2 positions are modified to N6-(beta-hydroxybutyryl)lysine; alternate: lysine 113 and lysine 117. N6-glutaryllysine; alternate occurs at positions 113 and 117. N6-succinyllysine; alternate is present on residues lysine 113 and lysine 117. Lysine 113 bears the N6-lactoyllysine; alternate mark. Lysine 113 carries the N6-malonyllysine; alternate modification. Lysine 113 is modified (N6-methylated lysine; alternate). Lysine 117 is covalently cross-linked (Glycyl lysine isopeptide (Lys-Gly) (interchain with G-Cter in ubiquitin); alternate).

This sequence belongs to the histone H2B family. The nucleosome is a histone octamer containing two molecules each of H2A, H2B, H3 and H4 assembled in one H3-H4 heterotetramer and two H2A-H2B heterodimers. The octamer wraps approximately 147 bp of DNA.

It is found in the chromosome. The protein resides in the nucleus. Core component of nucleosome. Nucleosomes wrap and compact DNA into chromatin, limiting DNA accessibility to the cellular machineries which require DNA as a template. Histones thereby play a central role in transcription regulation, DNA repair, DNA replication and chromosomal stability. DNA accessibility is regulated via a complex set of post-translational modifications of histones, also called histone code, and nucleosome remodeling. The polypeptide is Histone H2B type 2-K1 (Homo sapiens (Human)).